The chain runs to 228 residues: L-ribulose-5-phosphate 4-epimerase UlaF (228 aa).

Substrate contacts are provided by residues Gly-26–Asn-27, Ser-43–Gly-44, and Ser-72–Ser-73. Asp-74, His-93, and His-95 together coordinate Zn(2+). The Proton donor/acceptor role is filled by Asp-118. His-167 contacts Zn(2+). Tyr-225 acts as the Proton donor/acceptor in catalysis.

The protein belongs to the aldolase class II family. AraD/FucA subfamily. Zn(2+) serves as cofactor.

It catalyses the reaction L-ribulose 5-phosphate = D-xylulose 5-phosphate. Its pathway is cofactor degradation; L-ascorbate degradation; D-xylulose 5-phosphate from L-ascorbate: step 4/4. In terms of biological role, catalyzes the isomerization of L-ribulose 5-phosphate to D-xylulose 5-phosphate. Is involved in the anaerobic L-ascorbate utilization. The polypeptide is L-ribulose-5-phosphate 4-epimerase UlaF (Salmonella paratyphi B (strain ATCC BAA-1250 / SPB7)).